We begin with the raw amino-acid sequence, 156 residues long: Cyanate hydratase (156 aa).

Active-site residues include arginine 96, glutamate 99, and serine 122.

It belongs to the cyanase family.

The enzyme catalyses cyanate + hydrogencarbonate + 3 H(+) = NH4(+) + 2 CO2. Functionally, catalyzes the reaction of cyanate with bicarbonate to produce ammonia and carbon dioxide. This chain is Cyanate hydratase, found in Burkholderia orbicola (strain MC0-3).